Here is a 326-residue protein sequence, read N- to C-terminus: Transmembrane protein 255B (326 aa).

A run of 4 helical transmembrane segments spans residues 26 to 46 (LWFV…GLAA), 55 to 75 (VGGY…IIGI), 85 to 105 (LVAA…CAIV), and 200 to 220 (AVLN…LGAF). A disordered region spans residues 284-326 (LASSEDLQPPSPSSSGSGLPGQAPPCYAPTYFPPGEKPPPYAP). A compositionally biased stretch (pro residues) spans 305 to 326 (QAPPCYAPTYFPPGEKPPPYAP).

This sequence belongs to the TMEM255 family.

It localises to the membrane. The polypeptide is Transmembrane protein 255B (TMEM255B) (Homo sapiens (Human)).